The following is a 198-amino-acid chain: Peptidyl-tRNA hydrolase (198 aa).

Residue tyrosine 15 participates in tRNA binding. Histidine 20 (proton acceptor) is an active-site residue. The tRNA site is built by phenylalanine 66, asparagine 68, and asparagine 114.

It belongs to the PTH family. In terms of assembly, monomer.

Its subcellular location is the cytoplasm. The enzyme catalyses an N-acyl-L-alpha-aminoacyl-tRNA + H2O = an N-acyl-L-amino acid + a tRNA + H(+). In terms of biological role, hydrolyzes ribosome-free peptidyl-tRNAs (with 1 or more amino acids incorporated), which drop off the ribosome during protein synthesis, or as a result of ribosome stalling. Its function is as follows. Catalyzes the release of premature peptidyl moieties from peptidyl-tRNA molecules trapped in stalled 50S ribosomal subunits, and thus maintains levels of free tRNAs and 50S ribosomes. This chain is Peptidyl-tRNA hydrolase, found in Cupriavidus taiwanensis (strain DSM 17343 / BCRC 17206 / CCUG 44338 / CIP 107171 / LMG 19424 / R1) (Ralstonia taiwanensis (strain LMG 19424)).